The primary structure comprises 474 residues: Ribosomal RNA small subunit methyltransferase F (474 aa).

Residues 121–127 (ASAPGSK), Glu145, Asp172, and Asp190 contribute to the S-adenosyl-L-methionine site. Cys243 functions as the Nucleophile in the catalytic mechanism.

It belongs to the class I-like SAM-binding methyltransferase superfamily. RsmB/NOP family.

It localises to the cytoplasm. It catalyses the reaction cytidine(1407) in 16S rRNA + S-adenosyl-L-methionine = 5-methylcytidine(1407) in 16S rRNA + S-adenosyl-L-homocysteine + H(+). Its function is as follows. Specifically methylates the cytosine at position 1407 (m5C1407) of 16S rRNA. This is Ribosomal RNA small subunit methyltransferase F from Shewanella piezotolerans (strain WP3 / JCM 13877).